A 366-amino-acid polypeptide reads, in one-letter code: Terpene synthase 4 (366 aa).

The short motif at 91–96 (DDFLER) is the DDxx(x)D/E motif element. The short motif at 241-249 (NDCVSYAKE) is the NDxxSxxxD/E motif element.

It belongs to the terpene synthase family.

It carries out the reaction (2E,6E)-farnesyl diphosphate = (1S,2S,4R)-beta-elemene + diphosphate. In terms of biological role, terpene synthase that converts its substrate farnesyl diphosphate (FPP) into the sesquiterpenes bicycloelemene, beta-elemene and 2 yet unidentified sesquiterpenes. The protein is Terpene synthase 4 of Dictyostelium purpureum (Slime mold).